We begin with the raw amino-acid sequence, 154 residues long: Ribosome maturation factor RimP (154 aa).

The protein belongs to the RimP family.

The protein resides in the cytoplasm. Its function is as follows. Required for maturation of 30S ribosomal subunits. This chain is Ribosome maturation factor RimP, found in Heliobacterium modesticaldum (strain ATCC 51547 / Ice1).